A 330-amino-acid chain; its full sequence is Phosphate acyltransferase (330 aa).

The protein belongs to the PlsX family. Homodimer. Probably interacts with PlsY.

The protein localises to the cytoplasm. It catalyses the reaction a fatty acyl-[ACP] + phosphate = an acyl phosphate + holo-[ACP]. Its pathway is lipid metabolism; phospholipid metabolism. Its function is as follows. Catalyzes the reversible formation of acyl-phosphate (acyl-PO(4)) from acyl-[acyl-carrier-protein] (acyl-ACP). This enzyme utilizes acyl-ACP as fatty acyl donor, but not acyl-CoA. The chain is Phosphate acyltransferase from Streptococcus pneumoniae (strain ATCC 700669 / Spain 23F-1).